Reading from the N-terminus, the 251-residue chain is Aliphatic sulfonates import ATP-binding protein SsuB (251 aa).

The region spanning 3–231 (VSIDGVSKYF…PRSKTSESFQ (229 aa)) is the ABC transporter domain. 39–46 (GPSGCGKS) is an ATP binding site.

It belongs to the ABC transporter superfamily. Aliphatic sulfonates importer (TC 3.A.1.17.2) family. In terms of assembly, the complex is composed of two ATP-binding proteins (SsuB), two transmembrane proteins (SsuC) and a solute-binding protein (SsuA).

It is found in the cell membrane. It catalyses the reaction ATP + H2O + aliphatic sulfonate-[sulfonate-binding protein]Side 1 = ADP + phosphate + aliphatic sulfonateSide 2 + [sulfonate-binding protein]Side 1.. Part of the ABC transporter complex SsuABC involved in aliphatic sulfonates import. Responsible for energy coupling to the transport system. The protein is Aliphatic sulfonates import ATP-binding protein SsuB of Bacillus cereus (strain ATCC 10987 / NRS 248).